Consider the following 176-residue polypeptide: Disulfide bond formation protein B (176 aa).

Topologically, residues 1–14 (MLRFLNQCSQGRGA) are cytoplasmic. The helical transmembrane segment at 15–31 (WLLMAFTALALELTALW) threads the bilayer. Residues 32 to 49 (FQHVMLLKPCVLCIYERC) are Periplasmic-facing. C41 and C44 are disulfide-bonded. Residues 50 to 65 (ALFGVLGAALIGAIAP) traverse the membrane as a helical segment. The Cytoplasmic segment spans residues 66 to 71 (KTPLRY). Residues 72–89 (VAMVIWLYSAFRGVQLTY) traverse the membrane as a helical segment. The Periplasmic segment spans residues 90–144 (EHTMLQLYPSPFATCDFMVRFPEWLPLDKWVPQVFVASGDCAERQWDFLGMEMPQ). A disulfide bridge connects residues C104 and C130. Residues 145 to 163 (WLLGIFIAYLIVAVLVVIS) form a helical membrane-spanning segment. Over 164–176 (QPFKAKKRDLFGR) the chain is Cytoplasmic.

Belongs to the DsbB family.

The protein resides in the cell inner membrane. Its function is as follows. Required for disulfide bond formation in some periplasmic proteins such as PhoA or OmpA. Acts by oxidizing the DsbA protein. In Shigella flexneri, this protein is Disulfide bond formation protein B.